Here is a 159-residue protein sequence, read N- to C-terminus: Putative 4-hydroxy-4-methyl-2-oxoglutarate aldolase (159 aa).

Residues 78–81 and Arg100 contribute to the substrate site; that span reads GDVI. Position 101 (Asp101) interacts with a divalent metal cation.

It belongs to the class II aldolase/RraA-like family. As to quaternary structure, homotrimer. Requires a divalent metal cation as cofactor.

The catalysed reaction is 4-hydroxy-4-methyl-2-oxoglutarate = 2 pyruvate. It catalyses the reaction oxaloacetate + H(+) = pyruvate + CO2. In terms of biological role, catalyzes the aldol cleavage of 4-hydroxy-4-methyl-2-oxoglutarate (HMG) into 2 molecules of pyruvate. Also contains a secondary oxaloacetate (OAA) decarboxylase activity due to the common pyruvate enolate transition state formed following C-C bond cleavage in the retro-aldol and decarboxylation reactions. This is Putative 4-hydroxy-4-methyl-2-oxoglutarate aldolase from Mycobacterium sp. (strain KMS).